Here is a 249-residue protein sequence, read N- to C-terminus: Proteasome subunit alpha (249 aa).

Belongs to the peptidase T1A family. The 20S proteasome core is composed of 14 alpha and 14 beta subunits that assemble into four stacked heptameric rings, resulting in a barrel-shaped structure. The two inner rings, each composed of seven catalytic beta subunits, are sandwiched by two outer rings, each composed of seven alpha subunits. The catalytic chamber with the active sites is on the inside of the barrel. Has a gated structure, the ends of the cylinder being occluded by the N-termini of the alpha-subunits. Is capped at one or both ends by the proteasome regulatory ATPase, PAN.

It localises to the cytoplasm. Its activity is regulated as follows. The formation of the proteasomal ATPase PAN-20S proteasome complex, via the docking of the C-termini of PAN into the intersubunit pockets in the alpha-rings, triggers opening of the gate for substrate entry. Interconversion between the open-gate and close-gate conformations leads to a dynamic regulation of the 20S proteasome proteolysis activity. Component of the proteasome core, a large protease complex with broad specificity involved in protein degradation. The chain is Proteasome subunit alpha from Methanosarcina mazei (strain ATCC BAA-159 / DSM 3647 / Goe1 / Go1 / JCM 11833 / OCM 88) (Methanosarcina frisia).